Here is an 87-residue protein sequence, read N- to C-terminus: U3-theraphotoxin-Cg1b (87 aa).

The signal sequence occupies residues 1-23 (MRTLTLIAIVTCAALVIFHAAAA). Residues 24–48 (EELEAQDVIQPEDIFTGVATLEEDR) constitute a propeptide that is removed on maturation. 3 disulfides stabilise this stretch: Cys-52–Cys-65, Cys-56–Cys-79, and Cys-73–Cys-84.

This sequence belongs to the neurotoxin 12 (Hwtx-2) family. 03 (juruin) subfamily. As to expression, expressed by the venom gland.

The protein localises to the secreted. In terms of biological role, probable ion channel inhibitor. The chain is U3-theraphotoxin-Cg1b from Chilobrachys guangxiensis (Chinese earth tiger tarantula).